A 130-amino-acid polypeptide reads, in one-letter code: Histone H2A type 3 (130 aa).

The interval 1-22 (MSGRGKQGGKARAKAKSRSSRA) is disordered. The residue at position 2 (Ser2) is an N-acetylserine. At Ser2 the chain carries Phosphoserine; by RPS6KA5. The residue at position 4 (Arg4) is a Citrulline; alternate. At Arg4 the chain carries Symmetric dimethylarginine; by PRMT5; alternate. Residue Lys6 is modified to N6-(2-hydroxyisobutyryl)lysine. Basic residues predominate over residues 7 to 19 (QGGKARAKAKSRS). At Lys10 the chain carries N6-(2-hydroxyisobutyryl)lysine; alternate. Residues Lys10 and Lys14 each carry the N6-(beta-hydroxybutyryl)lysine; alternate modification. N6-lactoyllysine; alternate is present on Lys10. N6-succinyllysine; alternate is present on Lys10. Lys14 is covalently cross-linked (Glycyl lysine isopeptide (Lys-Gly) (interchain with G-Cter in ubiquitin); alternate). Residue Lys16 forms a Glycyl lysine isopeptide (Lys-Gly) (interchain with G-Cter in ubiquitin) linkage. Lys37 bears the N6-(2-hydroxyisobutyryl)lysine; alternate mark. Lys37 is modified (N6-(beta-hydroxybutyryl)lysine; alternate). Position 37 is an N6-crotonyllysine; alternate (Lys37). An N6-(2-hydroxyisobutyryl)lysine mark is found at Lys75 and Lys76. Lys96 is subject to N6-(2-hydroxyisobutyryl)lysine; alternate. Lys96 bears the N6-(beta-hydroxybutyryl)lysine; alternate mark. N6-succinyllysine; alternate is present on Lys96. Residue Lys96 is modified to N6-glutaryllysine; alternate. The residue at position 105 (Gln105) is an N5-methylglutamine. At Lys119 the chain carries N6-(2-hydroxyisobutyryl)lysine; alternate. An N6-(beta-hydroxybutyryl)lysine; alternate modification is found at Lys119. Lys119 and Lys120 each carry N6-crotonyllysine; alternate. Lys119 and Lys120 each carry N6-glutaryllysine; alternate. Residue Lys120 forms a Glycyl lysine isopeptide (Lys-Gly) (interchain with G-Cter in ubiquitin); alternate linkage. Thr121 carries the post-translational modification Phosphothreonine; by DCAF1. Lys126 is subject to N6-crotonyllysine; alternate. At Lys126 the chain carries N6-glutaryllysine; alternate.

This sequence belongs to the histone H2A family. As to quaternary structure, the nucleosome is a histone octamer containing two molecules each of H2A, H2B, H3 and H4 assembled in one H3-H4 heterotetramer and two H2A-H2B heterodimers. The octamer wraps approximately 147 bp of DNA. Deiminated on Arg-4 in granulocytes upon calcium entry. Post-translationally, monoubiquitination of Lys-120 (H2AK119Ub) by RING1, TRIM37 and RNF2/RING2 complex gives a specific tag for epigenetic transcriptional repression and participates in X chromosome inactivation of female mammals. It is involved in the initiation of both imprinted and random X inactivation. Ubiquitinated H2A is enriched in inactive X chromosome chromatin. Ubiquitination of H2A functions downstream of methylation of 'Lys-27' of histone H3 (H3K27me). H2AK119Ub by RNF2/RING2 can also be induced by ultraviolet and may be involved in DNA repair. Monoubiquitination of Lys-120 (H2AK119Ub) by TRIM37 may promote transformation of cells in a number of breast cancers. Following DNA double-strand breaks (DSBs), it is ubiquitinated through 'Lys-63' linkage of ubiquitin moieties by the E2 ligase UBE2N and the E3 ligases RNF8 and RNF168, leading to the recruitment of repair proteins to sites of DNA damage. Ubiquitination at Lys-14 and Lys-16 (H2AK13Ub and H2AK15Ub, respectively) in response to DNA damage is initiated by RNF168 that mediates monoubiquitination at these 2 sites, and 'Lys-63'-linked ubiquitin are then conjugated to monoubiquitin; RNF8 is able to extend 'Lys-63'-linked ubiquitin chains in vitro. Deubiquitinated by USP51 at Lys-14 and Lys-16 (H2AK13Ub and H2AK15Ub, respectively) after damaged DNA is repaired. H2AK119Ub and ionizing radiation-induced 'Lys-63'-linked ubiquitination (H2AK13Ub and H2AK15Ub) are distinct events. In terms of processing, phosphorylation on Ser-2 (H2AS1ph) is enhanced during mitosis. Phosphorylation on Ser-2 by RPS6KA5/MSK1 directly represses transcription. Acetylation of H3 inhibits Ser-2 phosphorylation by RPS6KA5/MSK1. Phosphorylation at Thr-121 (H2AT120ph) by DCAF1 is present in the regulatory region of many tumor suppresor genes and down-regulates their transcription. Glutamine methylation at Gln-105 (H2AQ104me) by FBL is specifically dedicated to polymerase I. It is present at 35S ribosomal DNA locus and impairs binding of the FACT complex. Post-translationally, symmetric dimethylation on Arg-4 by the PRDM1/PRMT5 complex may play a crucial role in the germ-cell lineage. In terms of processing, crotonylation (Kcr) is specifically present in male germ cells and marks testis-specific genes in post-meiotic cells, including X-linked genes that escape sex chromosome inactivation in haploid cells. Crotonylation marks active promoters and enhancers and confers resistance to transcriptional repressors. It is also associated with post-meiotically activated genes on autosomes. Lactylated in macrophages by EP300/P300 by using lactoyl-CoA directly derived from endogenous or exogenous lactate, leading to stimulates gene transcription.

The protein localises to the nucleus. It localises to the chromosome. Its function is as follows. Core component of nucleosome. Nucleosomes wrap and compact DNA into chromatin, limiting DNA accessibility to the cellular machineries which require DNA as a template. Histones thereby play a central role in transcription regulation, DNA repair, DNA replication and chromosomal stability. DNA accessibility is regulated via a complex set of post-translational modifications of histones, also called histone code, and nucleosome remodeling. This chain is Histone H2A type 3, found in Homo sapiens (Human).